A 118-amino-acid polypeptide reads, in one-letter code: T cell receptor gamma variable 8 (118 aa).

Positions 1–17 are cleaved as a signal peptide; sequence MLLALALLLAFLPPASQ. Residues 18 to 118 enclose the Ig-like domain; sequence KSSNLEGRTK…GVYYCATWDR (101 aa). A disulfide bridge links cysteine 41 with cysteine 113.

As to quaternary structure, gamma-delta TR is a heterodimer composed of a gamma and delta chain; disulfide-linked. The gamma-delta TR is associated with the transmembrane signaling CD3 coreceptor proteins following the stoichiometry: a single gamma-delta TR heterodimer associates with one CD3D-CD3E heterodimer, one CD3G-CD3E heterodimer and one CD247 homodimer forming a stable octameric structure. Upon activation, gamma-delta TR complex associates with FCER1G to initiate intracellular signaling.

Its subcellular location is the cell membrane. In terms of biological role, v region of the variable domain of T cell receptor (TR) gamma chain that participates in the antigen recognition. Gamma-delta TRs recognize a variety of self and foreign non-peptide antigens frequently expressed at the epithelial boundaries between the host and external environment, including endogenous lipids presented by MH-like protein CD1D and phosphoantigens presented by butyrophilin-like molecule BTN3A1. Upon antigen recognition induces rapid, innate-like immune responses involved in pathogen clearance and tissue repair. Binding of gamma-delta TR complex to antigen triggers phosphorylation of immunoreceptor tyrosine-based activation motifs (ITAMs) in the CD3 chains by the LCK and FYN kinases, allowing the recruitment, phosphorylation, and activation of ZAP70 that facilitates phosphorylation of the scaffolding proteins LCP2 and LAT. This lead to the formation of a supramolecular signalosome that recruits the phospholipase PLCG1, resulting in calcium mobilization and ERK activation, ultimately leading to T cell expansion and differentiation into effector cells. Gamma-delta TRs are produced through somatic rearrangement of a limited repertoire of variable (V), diversity (D), and joining (J) genes. The potential diversity of gamma-delta TRs is conferred by the unique ability to rearrange (D) genes in tandem and to utilize all three reading frames. The combinatorial diversity is considerably increased by the sequence exonuclease trimming and random nucleotide (N) region additions which occur during the V-(D)-J rearrangements. In Homo sapiens (Human), this protein is T cell receptor gamma variable 8.